We begin with the raw amino-acid sequence, 337 residues long: Phenylpyruvate C(3)-methyltransferase (337 aa).

The protein belongs to the methyltransferase superfamily.

It catalyses the reaction 3-phenylpyruvate + S-adenosyl-L-methionine = (3S)-2-oxo-3-phenylbutanoate + S-adenosyl-L-homocysteine + H(+). Its pathway is antibiotic biosynthesis. Functionally, S-adenosyl-L-methionine-dependent methyltransferase involved in synthesis of the nonproteinogenic amino acid (2S,3S)-beta-methyl-phenylalanine, a building block of the antibiotic mannopeptimycin. This chain is Phenylpyruvate C(3)-methyltransferase (mppJ), found in Streptomyces hygroscopicus.